The sequence spans 236 residues: Kinetochore protein Spc25 (236 aa).

The stretch at 44–106 forms a coiled coil; sequence KNIISAKEAI…DMEAQLLRHT (63 aa). The disordered stretch occupies residues 194 to 217; that stretch reads EVAGASPVTPSGSERPKATSKHSN.

The protein belongs to the SPC25 family. Component of the Ndc80 complex, which is composed of Ndc80, Nuf2 and Spc25.

Its subcellular location is the nucleus. It is found in the chromosome. The protein localises to the centromere. It localises to the kinetochore. Its function is as follows. Acts as a component of the essential kinetochore-associated Ndc80 complex, which is required for chromosome segregation and spindle checkpoint activity during meiosis and mitosis. Required for kinetochore integrity and the organization of stable microtubule binding sites in the outer plate of the kinetochore. Participates in SAC signaling that responds specifically to disruptions in spindle microtubule dynamics. The NDC80 complex synergistically enhances the affinity of the SKA1 complex for microtubules and may allow the NDC80 complex to track depolymerizing microtubules. The chain is Kinetochore protein Spc25 from Drosophila persimilis (Fruit fly).